We begin with the raw amino-acid sequence, 447 residues long: Probable glycine dehydrogenase (decarboxylating) subunit 1 (447 aa).

Belongs to the GcvP family. N-terminal subunit subfamily. As to quaternary structure, the glycine cleavage system is composed of four proteins: P, T, L and H. In this organism, the P 'protein' is a heterodimer of two subunits.

It catalyses the reaction N(6)-[(R)-lipoyl]-L-lysyl-[glycine-cleavage complex H protein] + glycine + H(+) = N(6)-[(R)-S(8)-aminomethyldihydrolipoyl]-L-lysyl-[glycine-cleavage complex H protein] + CO2. Functionally, the glycine cleavage system catalyzes the degradation of glycine. The P protein binds the alpha-amino group of glycine through its pyridoxal phosphate cofactor; CO(2) is released and the remaining methylamine moiety is then transferred to the lipoamide cofactor of the H protein. This chain is Probable glycine dehydrogenase (decarboxylating) subunit 1, found in Bacillus cereus (strain ATCC 10987 / NRS 248).